The primary structure comprises 1132 residues: Phytochrome B (1132 aa).

A compositionally biased stretch (basic residues) spans 1–11 (MASGSRTKHSH). The tract at residues 1–27 (MASGSRTKHSHQSGQGQVQAQSSGTSN) is disordered. Positions 12–26 (QSGQGQVQAQSSGTS) are enriched in low complexity. One can recognise a GAF domain in the interval 231–409 (DVKLLCDTVV…AFGLQLNMEL (179 aa)). Residue C336 coordinates phytochromobilin. PAS domains follow at residues 623-694 (VARE…LRGE) and 757-828 (DYKA…MIVL). The Histidine kinase domain occupies 905-1125 (YLCQEIKSPL…LIILDLPMTR (221 aa)).

It belongs to the phytochrome family. Homodimer. In terms of processing, contains one covalently linked phytochromobilin chromophore.

In terms of biological role, regulatory photoreceptor which exists in two forms that are reversibly interconvertible by light: the Pr form that absorbs maximally in the red region of the spectrum and the Pfr form that absorbs maximally in the far-red region. Photoconversion of Pr to Pfr induces an array of morphogenic responses, whereas reconversion of Pfr to Pr cancels the induction of those responses. Pfr controls the expression of a number of nuclear genes including those encoding the small subunit of ribulose-bisphosphate carboxylase, chlorophyll A/B binding protein, protochlorophyllide reductase, rRNA, etc. It also controls the expression of its own gene(s) in a negative feedback fashion. This chain is Phytochrome B (PHYB), found in Nicotiana tabacum (Common tobacco).